Here is a 362-residue protein sequence, read N- to C-terminus: DNA replication and repair protein RecF (362 aa).

30 to 37 (GLNAQGKS) is an ATP binding site.

It belongs to the RecF family.

The protein resides in the cytoplasm. The RecF protein is involved in DNA metabolism; it is required for DNA replication and normal SOS inducibility. RecF binds preferentially to single-stranded, linear DNA. It also seems to bind ATP. The protein is DNA replication and repair protein RecF of Thermoanaerobacter pseudethanolicus (strain ATCC 33223 / 39E) (Clostridium thermohydrosulfuricum).